A 348-amino-acid polypeptide reads, in one-letter code: Protein pelota homolog (348 aa).

Belongs to the eukaryotic release factor 1 family. Pelota subfamily. As to quaternary structure, monomer. The cofactor is a divalent metal cation.

The protein localises to the cytoplasm. Its function is as follows. May function in recognizing stalled ribosomes, interact with stem-loop structures in stalled mRNA molecules, and effect endonucleolytic cleavage of the mRNA. May play a role in the release non-functional ribosomes and degradation of damaged mRNAs. Has endoribonuclease activity. The chain is Protein pelota homolog from Methanococcus maripaludis (strain C5 / ATCC BAA-1333).